A 190-amino-acid polypeptide reads, in one-letter code: MTKQVYIIHGYRASSTNHWFPWLKKRLLADGVQADILNMPNPLQPRLEDWLDTLSLYQHTLHENTYLVAHSLGCPAILRFLEHLQLRKQLGGIILVSGFAKSLPTLQMLDEFTQGSFDHQKIIESAKHRAVIASKDDQIVPFSFSKDLAQQIDAALYEVQHGGHFLEDEGFTSLPIVYDVLTSYFSKETR.

Catalysis depends on charge relay system residues Ser-71, Asp-137, and His-164.

The protein belongs to the RBBP9 family.

This Bacillus subtilis (strain 168) protein is Putative hydrolase YdeN (ydeN).